The following is a 70-amino-acid chain: Probable non-specific lipid-transfer protein 2 (70 aa).

Cystine bridges form between cysteine 4-cysteine 38, cysteine 12-cysteine 26, cysteine 27-cysteine 62, and cysteine 36-cysteine 69.

Potential phospholipid transfer protein. In Zea mays (Maize), this protein is Probable non-specific lipid-transfer protein 2.